Consider the following 714-residue polypeptide: VIN3-like protein 2 (714 aa).

A PHD-type zinc finger spans residues 164–232; that stretch reads RCSCCICRKY…CFYCVSCGKA (69 aa). A Nuclear localization signal motif is present at residues 239 to 246; sequence WKKQLTIA. The Fibronectin type-III domain maps to 366-463; it reads GSTKIRFEDV…INVLTRSAEE (98 aa). The segment covering 478–498 has biased composition (polar residues); that stretch reads LTNCSTLSSNPSSVEAESNND. The segment at 478-530 is disordered; that stretch reads LTNCSTLSSNPSSVEAESNNDYIVPKKPSSKNEDNNSPSVDESAAKRMKRTTD. The VIN3-Interacting Domain (VID) stretch occupies residues 602–714; that stretch reads SMKDNCNNGD…PSGFCMKLWH (113 aa).

Self-interacts. Interacts with VIN3 and VIL1. Component of the plant homeodomain / polycomb repressive complex 2 (PHD-PRC2) large complex during prolonged cold, composed of core PRC2 components (VRN2, EZA1, FIE and MSI1), and three related PHD finger proteins (VIL1, VIL2 and VIN3) that mediates histone H3 trimethylation on 'Lys-27' (H3K27me3).

It localises to the nucleus. In terms of biological role, maybe involved in both the vernalization and photoperiod pathways by regulating gene expression. Binds preferentially to dimethylated histone H3 'Lys-9' (H3K9me2). Promotes flowering in non-inductive photoperiods (e.g. short days) through the maintenance of the epigenetically repressed state of MAF5 via H3K9me2 and plant homeodomain / polycomb repressive complex 2 (PHD-PRC2)-dependent H3K27me3. This chain is VIN3-like protein 2 (VIL2), found in Arabidopsis thaliana (Mouse-ear cress).